The primary structure comprises 1033 residues: Phospholipid-transporting ATPase neo1 (1033 aa).

A run of 4 helical transmembrane segments spans residues 133 to 153 (LKIG…LITL), 274 to 294 (TLWA…VYTG), 317 to 337 (INFY…GLTF), and 344 to 364 (DWYI…PINL). The 4-aspartylphosphate intermediate role is filled by Asp408. Asp408, Lys409, Thr410, Glu491, Phe528, Ser530, Lys533, Lys551, Arg580, Thr581, Thr662, Gly663, Asp664, Arg744, and Lys750 together coordinate ATP. Asp408 provides a ligand contact to Mg(2+). Thr410 is a binding site for Mg(2+). Transmembrane regions (helical) follow at residues 768 to 788 (IGDG…IGIV), 843 to 863 (VVYS…LLLV), 913 to 933 (VLIS…LIGF), 939 to 959 (MLAV…ALQI), 965 to 985 (TIVM…PFLT), and 992 to 1012 (FLLG…SLLP). Asp770 lines the Mg(2+) pocket. ATP contacts are provided by Asn773 and Asp774. Asp774 serves as a coordination point for Mg(2+).

This sequence belongs to the cation transport ATPase (P-type) (TC 3.A.3) family. Type IV subfamily. Functions without a CDC50/LEM3 family accessory subunit. Mg(2+) is required as a cofactor.

Its subcellular location is the endosome membrane. The protein localises to the golgi apparatus membrane. It carries out the reaction ATP + H2O + phospholipidSide 1 = ADP + phosphate + phospholipidSide 2.. The enzyme catalyses a 1,2-diacyl-sn-glycero-3-phospho-L-serine(out) + ATP + H2O = a 1,2-diacyl-sn-glycero-3-phospho-L-serine(in) + ADP + phosphate + H(+). The catalysed reaction is a 1,2-diacyl-sn-glycero-3-phosphoethanolamine(out) + ATP + H2O = a 1,2-diacyl-sn-glycero-3-phosphoethanolamine(in) + ADP + phosphate + H(+). In terms of biological role, flippase that catalyzes the hydrolysis of ATP coupled to the transport of lysophosphatidylserine, phosphatidylethanolamine, and phosphatidylserine from the lumenal to the cytosolic leaflet of the Golgi apparatus membrane and ensures the maintenance of asymmetric distribution of phospholipids. The protein is Phospholipid-transporting ATPase neo1 of Schizosaccharomyces pombe (strain 972 / ATCC 24843) (Fission yeast).